The chain runs to 299 residues: Taste receptor type 2 member 5 (299 aa).

A topological domain (extracellular) is located at residue M1. Residues 2–22 (LSAGLGLLMLVAVVEFLIGLI) form a helical membrane-spanning segment. The Cytoplasmic portion of the chain corresponds to 23-45 (GNGVLVVWSFREWIRKFSWSSYN). The helical transmembrane segment at 46 to 66 (LIILGLAGCRFVLQWLIILDL) threads the bilayer. Residues 67-82 (SLFPLFQSSRWLRYLS) lie on the Extracellular side of the membrane. The helical transmembrane segment at 83–103 (IFWVLVSQASLWFATFLSVFY) threads the bilayer. At 104–127 (CKKITTFDHPAYLWLKQRAYNLSL) the chain is on the cytoplasmic side. Residues 128-148 (WCLLGYFIINLLLTVQIGLMF) traverse the membrane as a helical segment. Residues 149 to 175 (YHPPQGNSSIRYPFESWQYLYAFRLNS) are Extracellular-facing. An N-linked (GlcNAc...) asparagine glycan is attached at N155. The helical transmembrane segment at 176-196 (GSYLPLMVFLVSSGMLIVSLY) threads the bilayer. The Cytoplasmic segment spans residues 197–223 (THHKKMKVHSAGRRDVRAKAHITALKS). Residues 224-244 (LGCFLLLHLVYIMASPFSIAS) traverse the membrane as a helical segment. Over 245–253 (KTYPPDLTS) the chain is Extracellular. The helical transmembrane segment at 254–274 (VFIWETLMAAYPSLHSLILIM) threads the bilayer. Topologically, residues 275–299 (GIPRVKQTCQKIXWKTVCARRCWGP) are cytoplasmic.

The protein belongs to the G-protein coupled receptor T2R family.

It localises to the membrane. Functionally, receptor that may play a role in the perception of bitterness and is gustducin-linked. May play a role in sensing the chemical composition of the gastrointestinal content. The activity of this receptor may stimulate alpha gustducin, mediate PLC-beta-2 activation and lead to the gating of TRPM5. The polypeptide is Taste receptor type 2 member 5 (TAS2R5) (Pan troglodytes (Chimpanzee)).